A 193-amino-acid chain; its full sequence is Large ribosomal subunit protein uL5 (193 aa).

Belongs to the universal ribosomal protein uL5 family. In terms of assembly, part of the 50S ribosomal subunit; part of the 5S rRNA/L5/L18/L25 subcomplex. Contacts the 5S rRNA and the P site tRNA. Forms a bridge to the 30S subunit in the 70S ribosome.

Functionally, this is one of the proteins that bind and probably mediate the attachment of the 5S RNA into the large ribosomal subunit, where it forms part of the central protuberance. In the 70S ribosome it contacts protein S13 of the 30S subunit (bridge B1b), connecting the 2 subunits; this bridge is implicated in subunit movement. Contacts the P site tRNA; the 5S rRNA and some of its associated proteins might help stabilize positioning of ribosome-bound tRNAs. The sequence is that of Large ribosomal subunit protein uL5 from Arthrobacter sp. (strain FB24).